The chain runs to 294 residues: Nucleotide-binding protein A2cp1_0165 (294 aa).

17–24 (GVSGSGKS) is a binding site for ATP. Residue 68 to 71 (DARE) participates in GTP binding.

The protein belongs to the RapZ-like family.

In terms of biological role, displays ATPase and GTPase activities. This Anaeromyxobacter dehalogenans (strain 2CP-1 / ATCC BAA-258) protein is Nucleotide-binding protein A2cp1_0165.